Here is a 424-residue protein sequence, read N- to C-terminus: Appressorium protein ROW1 (424 aa).

The signal sequence occupies residues 1-21 (MTKLTLTVALVSALLASGASA). Disordered stretches follow at residues 19-54 (ASAQQPTGTGNGPDPRATTDLNRNQPTKSWTQWQPK), 69-90 (ANRIESGEGGQPGGEPQSGYNT), 278-304 (SGSTFRQGDPVTPPAHPAPSSSQCSSV), and 327-398 (SSSA…TQGA). The Extracellular portion of the chain corresponds to 22–403 (QQPTGTGNGP…NTQGAASSAS (382 aa)). Polar residues predominate over residues 37–54 (TDLNRNQPTKSWTQWQPK). Composition is skewed to low complexity over residues 295-304 (APSSSQCSSV) and 327-347 (SSSAASSAATDSSASTNSASS). Over residues 362-382 (SGTGSGSGSGSGSGSGSGSGS) the composition is skewed to gly residues. Positions 383 to 398 (SSGSSSSGSSSNTQGA) are enriched in low complexity. A helical transmembrane segment spans residues 404–424 (SLTISVGLAGLVAIGAAAFAL).

It localises to the cell membrane. It is found in the secreted. Its function is as follows. Plays a role in the formation of the appressorium, a specialized infection structure with the purpose of penetrating the host surface, and is required for proper remodeling of the appressorium wall and vesicle secretion. This is Appressorium protein ROW1 from Mycosarcoma maydis (Corn smut fungus).